The chain runs to 202 residues: Peptide methionine sulfoxide reductase A3 (202 aa).

Residues 1–34 (MNILNRLGLGSSGQTNMDPSPIAQGNDDDTPAPG) form a disordered region. A Phosphoserine modification is found at serine 189.

The protein belongs to the MsrA Met sulfoxide reductase family. In terms of tissue distribution, expressed in rosette and cauline leaves, and at lower levels in roots, stems and flowers (at protein level).

The protein resides in the cytoplasm. The protein localises to the cytosol. It catalyses the reaction L-methionyl-[protein] + [thioredoxin]-disulfide + H2O = L-methionyl-(S)-S-oxide-[protein] + [thioredoxin]-dithiol. The enzyme catalyses [thioredoxin]-disulfide + L-methionine + H2O = L-methionine (S)-S-oxide + [thioredoxin]-dithiol. Its function is as follows. Catalyzes the reduction of methionine sulfoxide (MetSO) to methionine in proteins. Plays a protective role against oxidative stress by restoring activity to proteins that have been inactivated by methionine oxidation. May prevent cellular oxidative damage due to light exposure. MSRA family specifically reduces the MetSO S-enantiomer. The chain is Peptide methionine sulfoxide reductase A3 (MSRA3) from Arabidopsis thaliana (Mouse-ear cress).